Here is a 152-residue protein sequence, read N- to C-terminus: Transcriptional regulator MraZ (152 aa).

2 SpoVT-AbrB domains span residues 5–52 (ASAI…PLHE) and 81–124 (AQDC…EESA).

The protein belongs to the MraZ family. As to quaternary structure, forms oligomers.

The protein localises to the cytoplasm. The protein resides in the nucleoid. This chain is Transcriptional regulator MraZ, found in Shewanella frigidimarina (strain NCIMB 400).